Here is a 406-residue protein sequence, read N- to C-terminus: S-adenosylmethionine synthase (406 aa).

ATP is bound at residue 140 to 145 (GRGSVD).

The protein belongs to the AdoMet synthase 2 family. Mg(2+) serves as cofactor.

It carries out the reaction L-methionine + ATP + H2O = S-adenosyl-L-methionine + phosphate + diphosphate. The protein operates within amino-acid biosynthesis; S-adenosyl-L-methionine biosynthesis; S-adenosyl-L-methionine from L-methionine: step 1/1. In terms of biological role, catalyzes the formation of S-adenosylmethionine from methionine and ATP. This Aeropyrum pernix (strain ATCC 700893 / DSM 11879 / JCM 9820 / NBRC 100138 / K1) protein is S-adenosylmethionine synthase (mat).